A 485-amino-acid polypeptide reads, in one-letter code: D-alanine--D-alanyl carrier protein ligase (485 aa).

144–145 (TS) provides a ligand contact to ATP. A D-alanine-binding site is contributed by aspartate 189. 284–289 (NTYGPT) lines the ATP pocket. Valine 293 contacts D-alanine. 2 residues coordinate ATP: aspartate 365 and lysine 473. D-alanine is bound at residue lysine 473.

The protein belongs to the ATP-dependent AMP-binding enzyme family. DltA subfamily.

It localises to the cytoplasm. It carries out the reaction holo-[D-alanyl-carrier protein] + D-alanine + ATP = D-alanyl-[D-alanyl-carrier protein] + AMP + diphosphate. It participates in cell wall biogenesis; lipoteichoic acid biosynthesis. Its function is as follows. Catalyzes the first step in the D-alanylation of lipoteichoic acid (LTA), the activation of D-alanine and its transfer onto the D-alanyl carrier protein (Dcp) DltC. In an ATP-dependent two-step reaction, forms a high energy D-alanyl-AMP intermediate, followed by transfer of the D-alanyl residue as a thiol ester to the phosphopantheinyl prosthetic group of the Dcp. D-alanylation of LTA plays an important role in modulating the properties of the cell wall in Gram-positive bacteria, influencing the net charge of the cell wall. This is D-alanine--D-alanyl carrier protein ligase from Staphylococcus aureus (strain bovine RF122 / ET3-1).